Here is a 799-residue protein sequence, read N- to C-terminus: Elongation factor G, mitochondrial (799 aa).

Residues M1 to C33 constitute a mitochondrion transit peptide. A tr-type G domain is found at D97–A384. Residues A106–T113, D182–H186, and N236–D239 contribute to the GTP site.

Belongs to the TRAFAC class translation factor GTPase superfamily. Classic translation factor GTPase family. EF-G/EF-2 subfamily.

The protein localises to the mitochondrion. It functions in the pathway protein biosynthesis; polypeptide chain elongation. Mitochondrial GTPase that catalyzes the GTP-dependent ribosomal translocation step during translation elongation. During this step, the ribosome changes from the pre-translocational (PRE) to the post-translocational (POST) state as the newly formed A-site-bound peptidyl-tRNA and P-site-bound deacylated tRNA move to the P and E sites, respectively. Catalyzes the coordinated movement of the two tRNA molecules, the mRNA and conformational changes in the ribosome. The chain is Elongation factor G, mitochondrial (mef1) from Penicillium rubens (strain ATCC 28089 / DSM 1075 / NRRL 1951 / Wisconsin 54-1255) (Penicillium chrysogenum).